A 311-amino-acid polypeptide reads, in one-letter code: D-alanine--D-alanine ligase (311 aa).

One can recognise an ATP-grasp domain in the interval 105 to 306 (KQLYIHAGLP…FSALLDRLIE (202 aa)). Residue 133 to 188 (ADRLGLPVVVKPEHEGSSIGLSIVRNRDQLAAAVETGWQYDRRCLIEKYVHGIEIT) coordinates ATP. 3 residues coordinate Mg(2+): Asp-261, Glu-273, and Asn-275.

This sequence belongs to the D-alanine--D-alanine ligase family. Mg(2+) serves as cofactor. Mn(2+) is required as a cofactor.

Its subcellular location is the cytoplasm. It carries out the reaction 2 D-alanine + ATP = D-alanyl-D-alanine + ADP + phosphate + H(+). It participates in cell wall biogenesis; peptidoglycan biosynthesis. Functionally, cell wall formation. The chain is D-alanine--D-alanine ligase from Syntrophobacter fumaroxidans (strain DSM 10017 / MPOB).